Reading from the N-terminus, the 170-residue chain is Thialysine N-epsilon-acetyltransferase (170 aa).

Positions 4 to 166 (TRIREARESD…FRFEGEAMRE (163 aa)) constitute an N-acetyltransferase domain. 27 to 28 (FE) provides a ligand contact to substrate. At Lys-29 the chain carries N6-acetyllysine. Residue Glu-92 participates in substrate binding. Acetyl-CoA contacts are provided by residues 94-96 (IYV), 102-107 (GQGIGT), 133-135 (NKK), and Tyr-140. Tyr-140 functions as the Proton donor in the catalytic mechanism. Glu-152 contacts substrate.

Belongs to the acetyltransferase family. In terms of assembly, homodimer.

Its subcellular location is the cytoplasm. The enzyme catalyses S-(2-aminoethyl)-L-cysteine + acetyl-CoA = S-(2-acetamidoethyl)-L-cysteine + CoA + H(+). It catalyses the reaction an alkane-alpha,omega-diamine + acetyl-CoA = an N-acetylalkane-alpha,omega-diamine + CoA + H(+). Functionally, catalyzes the N-acetylation of the amino acid thialysine (S-(2-aminoethyl)-L-cysteine), a L-lysine analog with the 4-methylene group substituted with a sulfur. May also catalyze acetylation of polyamines, such as norspermidine, spermidine or spermine. However, ability to acetylate polyamines is weak, suggesting that it does not act as a diamine acetyltransferase in vivo. This chain is Thialysine N-epsilon-acetyltransferase, found in Mus musculus (Mouse).